Here is a 51-residue protein sequence, read N- to C-terminus: Protein Tat (51 aa).

Over residues 1–25 (EAETATKSCSGRQANQVSLPKQPAS) the composition is skewed to polar residues. Residues 1–51 (EAETATKSCSGRQANQVSLPKQPASQPRGDPTGPKESKKKVETETETDPVN) form a disordered region. Lysine 21 is covalently cross-linked (Glycyl lysine isopeptide (Lys-Gly) (interchain with G-Cter in ubiquitin)). Residues 28–30 (RGD) carry the Cell attachment site motif. Positions 33–43 (GPKESKKKVET) are enriched in basic and acidic residues.

Belongs to the lentiviruses Tat family. In terms of assembly, interacts with host CCNT1. Associates with the P-TEFb complex composed at least of Tat, P-TEFb (CDK9 and CCNT1), TAR RNA, RNA Pol II. Recruits the HATs CREBBP, TAF1/TFIID, EP300, PCAF and GCN5L2. Interacts with host KAT5/Tip60; this interaction targets the latter to degradation. Interacts with the host deacetylase SIRT1. Interacts with host capping enzyme RNGTT; this interaction stimulates RNGTT. Binds to host KDR, and to the host integrins ITGAV/ITGB3 and ITGA5/ITGB1. Interacts with host KPNB1/importin beta-1 without previous binding to KPNA1/importin alpha-1. Interacts with EIF2AK2. Interacts with host nucleosome assembly protein NAP1L1; this interaction may be required for the transport of Tat within the nucleus, since the two proteins interact at the nuclear rim. Interacts with host C1QBP/SF2P32; this interaction involves lysine-acetylated Tat. Interacts with the host chemokine receptors CCR2, CCR3 and CXCR4. Interacts with host DPP4/CD26; this interaction may trigger an anti-proliferative effect. Interacts with host LDLR. Interacts with the host extracellular matrix metalloproteinase MMP1. Interacts with host PRMT6; this interaction mediates Tat's methylation. Interacts with, and is ubiquitinated by MDM2/Hdm2. Interacts with host PSMC3 and HTATIP2. Interacts with STAB1; this interaction may overcome SATB1-mediated repression of IL2 and IL2RA (interleukin) in T cells by binding to the same domain than HDAC1. Interacts (when acetylated) with human CDK13, thereby increasing HIV-1 mRNA splicing and promoting the production of the doubly spliced HIV-1 protein Nef. Post-translationally, acetylation by EP300, CREBBP, GCN5L2/GCN5 and PCAF regulates the transactivation activity of Tat. In terms of processing, phosphorylated by EIF2AK2 on serine and threonine residues adjacent to the basic region important for TAR RNA binding and function. Phosphorylation of Tat by EIF2AK2 is dependent on the prior activation of EIF2AK2 by dsRNA. Asymmetrical arginine methylation by host PRMT6 seems to diminish the transactivation capacity of Tat and affects the interaction with host CCNT1. Post-translationally, polyubiquitination by MDM2 does not target Tat to degradation, but activates its transactivation function and fosters interaction with CCNT1 and TAR RNA.

It localises to the host nucleus. The protein resides in the host nucleolus. The protein localises to the host cytoplasm. Its subcellular location is the secreted. Transcriptional activator that increases RNA Pol II processivity, thereby increasing the level of full-length viral transcripts. Recognizes a hairpin structure at the 5'-LTR of the nascent viral mRNAs referred to as the transactivation responsive RNA element (TAR) and recruits the cyclin T1-CDK9 complex (P-TEFb complex) that will in turn hyperphosphorylate the RNA polymerase II to allow efficient elongation. The CDK9 component of P-TEFb and other Tat-activated kinases hyperphosphorylate the C-terminus of RNA Pol II that becomes stabilized and much more processive. Other factors such as HTATSF1/Tat-SF1, SUPT5H/SPT5, and HTATIP2 are also important for Tat's function. Besides its effect on RNA Pol II processivity, Tat induces chromatin remodeling of proviral genes by recruiting the histone acetyltransferases (HATs) CREBBP, EP300 and PCAF to the chromatin. This also contributes to the increase in proviral transcription rate, especially when the provirus integrates in transcriptionally silent region of the host genome. To ensure maximal activation of the LTR, Tat mediates nuclear translocation of NF-kappa-B by interacting with host RELA. Through its interaction with host TBP, Tat may also modulate transcription initiation. Tat can reactivate a latently infected cell by penetrating in it and transactivating its LTR promoter. In the cytoplasm, Tat is thought to act as a translational activator of HIV-1 mRNAs. Its function is as follows. Extracellular circulating Tat can be endocytosed by surrounding uninfected cells via the binding to several surface receptors such as CD26, CXCR4, heparan sulfate proteoglycans (HSPG) or LDLR. Neurons are rarely infected, but they internalize Tat via their LDLR. Endosomal low pH allows Tat to cross the endosome membrane to enter the cytosol and eventually further translocate into the nucleus, thereby inducing severe cell dysfunctions ranging from cell activation to cell death. Through its interaction with nuclear HATs, Tat is potentially able to control the acetylation-dependent cellular gene expression. Tat seems to inhibit the HAT activity of KAT5/Tip60 and TAF1, and consequently modify the expression of specific cellular genes. Modulates the expression of many cellular genes involved in cell survival, proliferation or in coding for cytokines (such as IL10) or cytokine receptors. May be involved in the derepression of host interleukin IL2 expression. Mediates the activation of cyclin-dependent kinases and dysregulation of microtubule network. Tat plays a role in T-cell and neurons apoptosis. Tat induced neurotoxicity and apoptosis probably contribute to neuroAIDS. Host extracellular matrix metalloproteinase MMP1 cleaves Tat and decreases Tat's mediated neurotoxicity. Circulating Tat also acts as a chemokine-like and/or growth factor-like molecule that binds to specific receptors on the surface of the cells, affecting many cellular pathways. In the vascular system, Tat binds to ITGAV/ITGB3 and ITGA5/ITGB1 integrins dimers at the surface of endothelial cells and competes with bFGF for heparin-binding sites, leading to an excess of soluble bFGF. Binds to KDR/VEGFR-2. All these Tat-mediated effects enhance angiogenesis in Kaposi's sarcoma lesions. This chain is Protein Tat, found in Homo sapiens (Human).